We begin with the raw amino-acid sequence, 358 residues long: uncharacterized protein (358 aa).

Residues 324 to 358 (DMEVEETPPTTNKDLPRGATQPKRNSIKRVSKLID) form a disordered region. Residues 348–358 (NSIKRVSKLID) show a composition bias toward basic residues.

This is an uncharacterized protein from Mycoplasma pneumoniae (strain ATCC 29342 / M129 / Subtype 1) (Mycoplasmoides pneumoniae).